A 132-amino-acid chain; its full sequence is Urease subunit beta (132 aa).

It belongs to the urease beta subunit family. In terms of assembly, heterotrimer of UreA (gamma), UreB (beta) and UreC (alpha) subunits. Three heterotrimers associate to form the active enzyme.

Its subcellular location is the cytoplasm. The enzyme catalyses urea + 2 H2O + H(+) = hydrogencarbonate + 2 NH4(+). It participates in nitrogen metabolism; urea degradation; CO(2) and NH(3) from urea (urease route): step 1/1. The sequence is that of Urease subunit beta from Natronomonas pharaonis (strain ATCC 35678 / DSM 2160 / CIP 103997 / JCM 8858 / NBRC 14720 / NCIMB 2260 / Gabara) (Halobacterium pharaonis).